The chain runs to 336 residues: Small ribosomal subunit protein RACK1y (336 aa).

7 WD repeats span residues 15-55 (GHND…TAVA), 74-113 (GHSH…TTRR), 116-155 (GHTK…KYTI), 164-205 (GHTG…LRTK), 208-247 (GHNG…MLYK), 249-287 (DAGA…VMQD), and 297-336 (SQML…GYAI).

Belongs to the WD repeat G protein beta family. Ribosomal protein RACK1 subfamily. Homodimer and heterodimer with RACK1A.

Component of the RACK1 regulatory proteins that play a role in multiple signal transduction pathways. This Oryza sativa subsp. japonica (Rice) protein is Small ribosomal subunit protein RACK1y (RACK1B).